A 493-amino-acid polypeptide reads, in one-letter code: MINSSFILLASTVTSKKVGRITQIIGPVMDVAFPSGNMPNIYNALVVKGKNAAGQDIDVTCEVQQLLGDNKVRAVAMSATDGLMRGMDVIDTGSALSVPVGEVTLGRIFNVLGEPVDNMGPVNATVTSPIHRSAPAFTQLDTKLSIFETGIKVVDLLAPYRRGGKIGLFGGAGVGKTVLIMELINNIAKAHGGVSVFGGVGERTREGNDLYMEMKESKVINEENLGESKVALVYGQMNEPPGARMRVGLTALTMAEYFRDVNKQDVLLFIDNIFRFVQAGSEVSALLGRMPSAVGYQPTLSTEMGGLQERITSTKEGSITSIQAVYVPADDLTDPAPATTFAHLDATTVLSRGLAAKGIYPAVDPLDSTSTMLQPWIVGEEHYETAQGVKKTLQRYKELQDIIAILGLDELSEEDRLLVARARKIERFLSQPFFVAEVFTGSPGKYVSLVETIKGFQMILSGDLDSLPEQAFYLVGNIDEATAKAATLQVENS.

ATP is bound at residue 170–177 (GGAGVGKT).

Belongs to the ATPase alpha/beta chains family. In terms of assembly, F-type ATPases have 2 components, CF(1) - the catalytic core - and CF(0) - the membrane proton channel. CF(1) has five subunits: alpha(3), beta(3), gamma(1), delta(1), epsilon(1). CF(0) has four main subunits: a(1), b(1), b'(1) and c(9-12).

The protein localises to the plastid. It is found in the chloroplast thylakoid membrane. It catalyses the reaction ATP + H2O + 4 H(+)(in) = ADP + phosphate + 5 H(+)(out). Its function is as follows. Produces ATP from ADP in the presence of a proton gradient across the membrane. The catalytic sites are hosted primarily by the beta subunits. This chain is ATP synthase subunit beta, chloroplastic, found in Chaetosphaeridium globosum (Charophycean green alga).